A 729-amino-acid polypeptide reads, in one-letter code: Capsid protein VP1 (729 aa).

Basic residues predominate over residues 1-10 (MAPPAKRAKR). Disordered stretches follow at residues 1–39 (MAPP…DAAA), 96–115 (LATD…KRTR), and 130–185 (KLTS…VGVS). A Nuclear localization signal motif is present at residues 4 to 13 (PAKRAKRGWV). Residues 19–64 (YLGPGNSLDQGEPTNPSDAAAKEHDEAYDQYIKSGKNPYLYFSAAD) form a phospholipase A2-like region. Residues 25–35 (SLDQGEPTNPS) are compositionally biased toward polar residues. Low complexity predominate over residues 132 to 142 (TSSAAQQSSQT). Positions 168-184 (GPGGSGGGGSGGGGVGV) are enriched in gly residues. A Mg(2+)-binding site is contributed by Asn-325.

Belongs to the parvoviridae capsid protein family.

The protein resides in the virion. Its subcellular location is the host nucleus. Functionally, capsid protein self-assembles to form an icosahedral capsid with a T=1 symmetry, about 22 nm in diameter, and consisting of 60 copies of two size variants of the capsid proteins, VP1 and VP2, which differ by the presence of an N-terminal extension in the minor protein VP1. The capsid encapsulates the genomic ssDNA. Capsid proteins are responsible for the attachment to host cell receptors. This attachment induces virion internalization predominantly through clathrin-dependent endocytosis. Binding to the host receptors also induces capsid rearrangements leading to surface exposure of VP1 N-terminus, specifically its phospholipase A2-like region and putative nuclear localization signal(s). VP1 N-terminus might serve as a lipolytic enzyme to breach the endosomal membrane during entry into host cell and might contribute to virus transport to the nucleus. The polypeptide is Capsid protein VP1 (Mus musculus (Mouse)).